A 171-amino-acid polypeptide reads, in one-letter code: Neuronal vesicle trafficking-associated protein 2 (171 aa).

A disordered region spans residues 1-21 (MVKLNSNPSEKGAKPPSVEDG). Residues 1 to 71 (MVKLNSNPSE…FRVPKIAEFT (71 aa)) are Cytoplasmic-facing. The helical; Signal-anchor for type II membrane protein transmembrane segment at 72–92 (VTILVSLALAFLACIVFLVVY) threads the bilayer. Residues 93–171 (KAFTYDHSCP…EPKPPKTQGH (79 aa)) lie on the Lumenal side of the membrane.

It belongs to the NSG family.

It localises to the membrane. The protein resides in the golgi apparatus. Its subcellular location is the trans-Golgi network membrane. It is found in the cell projection. The protein localises to the dendrite. It localises to the endosome membrane. The protein resides in the early endosome membrane. Its subcellular location is the late endosome membrane. It is found in the lysosome lumen. The protein localises to the cytoplasmic vesicle membrane. It localises to the golgi stack membrane. The protein resides in the endosome. Its subcellular location is the multivesicular body membrane. The chain is Neuronal vesicle trafficking-associated protein 2 from Bos taurus (Bovine).